The chain runs to 882 residues: MKKQIGDRYEPKDVENKWISLWEKKKSFAPNSNARESFSIVIPPPNVTGSLHIGHALNHTIQDILVRIERKKGKSTLWLPGMDHAGIATQMVVERELAKESKKRTDFTREEFIHKVWEWKNHSGGMITKQQKLLGESVDWSRERFTLDEGLSKAVFKVFKSLYDEGLIYRGERIINWCPASQTAISDLEVEFRETKGKLYHIKYPIHGKKDQFLVVATTRPETMLGDVAVCANPEDERYTSLKDVVLDLPLTNRQIPLLFDSFVDKEFGSGLVKITPAHDANDFEAGQRLGLKPLLVMNPNGTMNENAGIYQGLDRFEARKKVLADLEAKGLIEKIEDHIHAVGHNSRGGAVIEPYLSTQWFVKIKPLADLAVQAVQSGQVEFIPKMWEKTFFEWMNNIRDWCISRQLWWGHRIPAYHCKKCKHFEVSETAVTVCTSCGSQEVEPDPDVLDTWFSSQLWPFSTLGWPDQTEDLKRYYPTSVLVTGFDIIFFWVSRMIMMGMKFMQAPPFHKVLIHGLVRDKDGKKFSKSVGNVIDPLVMMDKYGTDSFRFFLAATLPEGKDILFDESRLDGYRSFCNKIWNSSRFILMNLEESFVPIGITPDIEKDLEPMDQWILSRFNHCLEEYNKAHSKFHFYEMAAAIYEFIWGDFCDWYIELVKPRAYGKVSPRSAEVAKQVLSDVLIRALGLLHPFMPFLTEEVHSVFSDQYIVTTPFPESYPVASDSLGVQKLNLLQEIVTKIRVMRSENGVAPDRKCKAIVKSSDNLSSSTILENEVSLLQLARLESIRIDTLYEIQKTDSVSHFTKGEIVLPLEGLIDVAKEKTRLEKELQKSELEKEKLEIKLSNPGFLSKAAPEVVEKERDKLKTLIDKVEVLKKGIQNLAG.

The short motif at 45 to 55 (PNVTGSLHIGH) is the 'HIGH' region element. The 'KMSKS' region signature appears at 525-529 (KFSKS). ATP is bound at residue Lys528. Positions 812 to 881 (EGLIDVAKEK…VLKKGIQNLA (70 aa)) form a coiled coil.

It belongs to the class-I aminoacyl-tRNA synthetase family. ValS type 1 subfamily. Monomer.

The protein localises to the cytoplasm. It carries out the reaction tRNA(Val) + L-valine + ATP = L-valyl-tRNA(Val) + AMP + diphosphate. In terms of biological role, catalyzes the attachment of valine to tRNA(Val). As ValRS can inadvertently accommodate and process structurally similar amino acids such as threonine, to avoid such errors, it has a 'posttransfer' editing activity that hydrolyzes mischarged Thr-tRNA(Val) in a tRNA-dependent manner. This is Valine--tRNA ligase from Leptospira interrogans serogroup Icterohaemorrhagiae serovar Lai (strain 56601).